The following is a 122-amino-acid chain: Large ribosomal subunit protein uL14c (122 aa).

This sequence belongs to the universal ribosomal protein uL14 family. In terms of assembly, part of the 50S ribosomal subunit.

Its subcellular location is the plastid. The protein resides in the chloroplast. Functionally, binds to 23S rRNA. The chain is Large ribosomal subunit protein uL14c from Gossypium barbadense (Sea Island cotton).